The chain runs to 473 residues: tRNA-2-methylthio-N(6)-dimethylallyladenosine synthase (473 aa).

The segment at 1–21 (MTQDSALLQAPEAIPSESLRD) is disordered. The MTTase N-terminal domain occupies 26–146 (RKVFIKTYGC…LPEALRRAKQ (121 aa)). Cys35, Cys71, Cys109, Cys187, Cys191, and Cys194 together coordinate [4Fe-4S] cluster. Residues 173 to 405 (RARGVTAFLT…QMLLLKQQQE (233 aa)) form the Radical SAM core domain. The 63-residue stretch at 408-470 (ESCVGKEIDL…TNSLFAEHAE (63 aa)) folds into the TRAM domain.

It belongs to the methylthiotransferase family. MiaB subfamily. Monomer. Requires [4Fe-4S] cluster as cofactor.

The protein resides in the cytoplasm. It carries out the reaction N(6)-dimethylallyladenosine(37) in tRNA + (sulfur carrier)-SH + AH2 + 2 S-adenosyl-L-methionine = 2-methylsulfanyl-N(6)-dimethylallyladenosine(37) in tRNA + (sulfur carrier)-H + 5'-deoxyadenosine + L-methionine + A + S-adenosyl-L-homocysteine + 2 H(+). Catalyzes the methylthiolation of N6-(dimethylallyl)adenosine (i(6)A), leading to the formation of 2-methylthio-N6-(dimethylallyl)adenosine (ms(2)i(6)A) at position 37 in tRNAs that read codons beginning with uridine. This chain is tRNA-2-methylthio-N(6)-dimethylallyladenosine synthase, found in Rhizobium johnstonii (strain DSM 114642 / LMG 32736 / 3841) (Rhizobium leguminosarum bv. viciae).